A 553-amino-acid chain; its full sequence is Dihydroxy-acid dehydratase (553 aa).

Position 78 (Asp-78) interacts with Mg(2+). Cys-119 is a [2Fe-2S] cluster binding site. Positions 120 and 121 each coordinate Mg(2+). Residue Lys-121 is modified to N6-carboxylysine. [2Fe-2S] cluster is bound at residue Cys-193. Glu-441 contacts Mg(2+). The Proton acceptor role is filled by Ser-467.

This sequence belongs to the IlvD/Edd family. In terms of assembly, homodimer. [2Fe-2S] cluster is required as a cofactor. Requires Mg(2+) as cofactor.

It carries out the reaction (2R)-2,3-dihydroxy-3-methylbutanoate = 3-methyl-2-oxobutanoate + H2O. It catalyses the reaction (2R,3R)-2,3-dihydroxy-3-methylpentanoate = (S)-3-methyl-2-oxopentanoate + H2O. It functions in the pathway amino-acid biosynthesis; L-isoleucine biosynthesis; L-isoleucine from 2-oxobutanoate: step 3/4. It participates in amino-acid biosynthesis; L-valine biosynthesis; L-valine from pyruvate: step 3/4. In terms of biological role, functions in the biosynthesis of branched-chain amino acids. Catalyzes the dehydration of (2R,3R)-2,3-dihydroxy-3-methylpentanoate (2,3-dihydroxy-3-methylvalerate) into 2-oxo-3-methylpentanoate (2-oxo-3-methylvalerate) and of (2R)-2,3-dihydroxy-3-methylbutanoate (2,3-dihydroxyisovalerate) into 2-oxo-3-methylbutanoate (2-oxoisovalerate), the penultimate precursor to L-isoleucine and L-valine, respectively. This Geobacter metallireducens (strain ATCC 53774 / DSM 7210 / GS-15) protein is Dihydroxy-acid dehydratase.